The sequence spans 861 residues: DNA mismatch repair protein MutS (861 aa).

An ATP-binding site is contributed by 618 to 625 (GPNMGGKS).

This sequence belongs to the DNA mismatch repair MutS family.

In terms of biological role, this protein is involved in the repair of mismatches in DNA. It is possible that it carries out the mismatch recognition step. This protein has a weak ATPase activity. In Shewanella sp. (strain ANA-3), this protein is DNA mismatch repair protein MutS.